The following is a 199-amino-acid chain: Recombination protein RecR (199 aa).

The segment at 57–72 adopts a C4-type zinc-finger fold; it reads CSVCGNITEQDPCAIC. The Toprim domain occupies 80-176; sequence STIMVVEEAK…KVTRLAAGLA (97 aa).

The protein belongs to the RecR family.

In terms of biological role, may play a role in DNA repair. It seems to be involved in an RecBC-independent recombinational process of DNA repair. It may act with RecF and RecO. The protein is Recombination protein RecR of Lactobacillus delbrueckii subsp. bulgaricus (strain ATCC BAA-365 / Lb-18).